The sequence spans 628 residues: Somatic embryogenesis receptor kinase 2 (628 aa).

The N-terminal stretch at 1–29 (MGRKKFEAFGFVCLISLLLLFNSLWLASS) is a signal peptide. Residues 30–241 (NMEGDALHSL…PTPGGYSATG (212 aa)) are Extracellular-facing. The tract at residues 45–85 (DPNNVLQSWDPTLVNPCTWFHVTCNNENSVIRVDLGNADLS) is PSKR1 binding. Residues 56-58 (TLV) form a CLE44 binding region. A disulfide bond links C61 and C68. Leucine-rich repeat receptor-like protein kinase binding stretches follow at residues 62–81 (TWFH…DLGN) and 100–105 (YLELYS). 64–65 (FH) serves as a coordination point for brassinolide. LRR repeat units lie at residues 95–119 (LKNL…LGNL), 121–143 (NLVS…LGKL), 144–167 (FKLR…LTNI), and 168–192 (MTLQ…SFSL). Residues N107 and N118 are each glycosylated (N-linked (GlcNAc...) asparagine). Leucine-rich repeat receptor-like protein kinase binding regions lie at residues 126–129 (DLYL) and 148–150 (FLR). Residues N153 and N187 are each glycosylated (N-linked (GlcNAc...) asparagine). The leucine-rich repeat receptor-like protein kinase binding stretch occupies residues 174–197 (DLSNNRLSGSVPDNGSFSLFTPIS). A disulfide bridge links C205 with C213. The helical transmembrane segment at 242 to 262 (AIAGGVAAGAALLFAAPALAF) threads the bilayer. Over 263–628 (AWWRRRKPQE…LHAMELSGPR (366 aa)) the chain is Cytoplasmic. T302 carries the phosphothreonine modification. In terms of domain architecture, Protein kinase spans 305 to 592 (FSNKNILGRG…GLAEKWDEWQ (288 aa)). 311-319 (LGRGGFGKV) serves as a coordination point for ATP. T328 carries the phosphothreonine modification. K333 serves as a coordination point for ATP. Phosphoserine is present on residues S386 and S389. D432 (proton acceptor) is an active-site residue. T462, T465, T466, and T471 each carry phosphothreonine. Y479 is subject to Phosphotyrosine. A Phosphoserine modification is found at S481. Residue T482 is modified to Phosphothreonine. The residue at position 486 (S486) is a Phosphoserine. At T562 the chain carries Phosphothreonine. S604 carries the post-translational modification Phosphoserine. Position 616 is a phosphothreonine (T616). At S625 the chain carries Phosphoserine.

Belongs to the protein kinase superfamily. Ser/Thr protein kinase family. In terms of assembly, homo- and heterodimer. Component of the SERK1 signaling complex, composed of KAPP, CDC48A, GRF6 or GRF7, SERK1, SERK2, SERK3/BAK1 and BRI1. Bind to BRI1 in a brassinolide-dependent manner. Heterodimer with PSKR1. Interacts with the EF-Tu receptor EFR and FLS2 in a specific ligand-induced manner. Interacts with ERECTA in a EPF2-induced manner. Interacts with ERL1 in a EPF1-induced manner. Interacts with TMM. In the presence of the signal peptide RGF1, interacts with RGI3/RGFR1 and RGI4/RGFR2/SKM2. Binds to the peptide CLE44 in the presence of TDR. Post-translationally, autophosphorylated. In terms of tissue distribution, expressed in flowers, tapetum, developing microspores, all cells of the embryo sac, provascular strands and developing vascular bundles. Low expression in adult vascular tissue.

It localises to the cell membrane. It catalyses the reaction L-seryl-[protein] + ATP = O-phospho-L-seryl-[protein] + ADP + H(+). It carries out the reaction L-threonyl-[protein] + ATP = O-phospho-L-threonyl-[protein] + ADP + H(+). Functionally, serine/threonine-kinase involved in brassinosteroid-dependent and -independent signaling pathways. Acts redundantly with SERK1 as a control point for sporophytic development controlling male gametophyte production. Serves as coreceptor to small peptide (e.g. RGF1 and CLE44) signaling. Involved in the perception of phytosulfokine and subsequent signal transduction. In Arabidopsis thaliana (Mouse-ear cress), this protein is Somatic embryogenesis receptor kinase 2.